The chain runs to 178 residues: Acireductone dioxygenase (178 aa).

Positions 1–22 (MKAYWYDNKPGDQREPHDSGRP) are disordered. The segment covering 9–22 (KPGDQREPHDSGRP) has biased composition (basic and acidic residues). The Fe(2+) site is built by His-81, His-83, Glu-87, and His-126. 4 residues coordinate Ni(2+): His-81, His-83, Glu-87, and His-126.

Belongs to the acireductone dioxygenase (ARD) family. Fe(2+) is required as a cofactor. Ni(2+) serves as cofactor.

It is found in the cytoplasm. Its subcellular location is the nucleus. It carries out the reaction 1,2-dihydroxy-5-(methylsulfanyl)pent-1-en-3-one + O2 = 4-methylsulfanyl-2-oxobutanoate + formate + 2 H(+). The catalysed reaction is 1,2-dihydroxy-5-(methylsulfanyl)pent-1-en-3-one + O2 = 3-(methylsulfanyl)propanoate + CO + formate + 2 H(+). It functions in the pathway amino-acid biosynthesis; L-methionine biosynthesis via salvage pathway; L-methionine from S-methyl-5-thio-alpha-D-ribose 1-phosphate: step 5/6. In terms of biological role, catalyzes 2 different reactions between oxygen and the acireductone 1,2-dihydroxy-3-keto-5-methylthiopentene (DHK-MTPene) depending upon the metal bound in the active site. Fe-containing acireductone dioxygenase (Fe-ARD) produces formate and 2-keto-4-methylthiobutyrate (KMTB), the alpha-ketoacid precursor of methionine in the methionine recycle pathway. Ni-containing acireductone dioxygenase (Ni-ARD) produces methylthiopropionate, carbon monoxide and formate, and does not lie on the methionine recycle pathway. In Emericella nidulans (strain FGSC A4 / ATCC 38163 / CBS 112.46 / NRRL 194 / M139) (Aspergillus nidulans), this protein is Acireductone dioxygenase (adi1).